The primary structure comprises 467 residues: Argininosuccinate lyase (467 aa).

This sequence belongs to the lyase 1 family. Argininosuccinate lyase subfamily.

The protein localises to the cytoplasm. It carries out the reaction 2-(N(omega)-L-arginino)succinate = fumarate + L-arginine. Its pathway is amino-acid biosynthesis; L-arginine biosynthesis; L-arginine from L-ornithine and carbamoyl phosphate: step 3/3. The polypeptide is Argininosuccinate lyase (Rhizobium etli (strain ATCC 51251 / DSM 11541 / JCM 21823 / NBRC 15573 / CFN 42)).